A 675-amino-acid chain; its full sequence is UvrABC system protein B (675 aa).

The Helicase ATP-binding domain maps to 35–422; sequence EGVSDGLMFQ…ADNVVEQVVR (388 aa). 48–55 contributes to the ATP binding site; that stretch reads GVTGSGKT. Positions 101–124 match the Beta-hairpin motif; the sequence is YYDYYQPEAYVPTRDLFIEKDSSI. One can recognise a Helicase C-terminal domain in the interval 439-605; the sequence is QVDDLLGEIH…GVSKAVRELI (167 aa). A UVR domain is found at 633–668; sequence AREIRRLEKLMMDHARNLEFEQAAAARDALNALKSR.

It belongs to the UvrB family. Forms a heterotetramer with UvrA during the search for lesions. Interacts with UvrC in an incision complex.

It localises to the cytoplasm. Its function is as follows. The UvrABC repair system catalyzes the recognition and processing of DNA lesions. A damage recognition complex composed of 2 UvrA and 2 UvrB subunits scans DNA for abnormalities. Upon binding of the UvrA(2)B(2) complex to a putative damaged site, the DNA wraps around one UvrB monomer. DNA wrap is dependent on ATP binding by UvrB and probably causes local melting of the DNA helix, facilitating insertion of UvrB beta-hairpin between the DNA strands. Then UvrB probes one DNA strand for the presence of a lesion. If a lesion is found the UvrA subunits dissociate and the UvrB-DNA preincision complex is formed. This complex is subsequently bound by UvrC and the second UvrB is released. If no lesion is found, the DNA wraps around the other UvrB subunit that will check the other stand for damage. The protein is UvrABC system protein B of Bordetella bronchiseptica (strain ATCC BAA-588 / NCTC 13252 / RB50) (Alcaligenes bronchisepticus).